An 83-amino-acid polypeptide reads, in one-letter code: uncharacterized protein (83 aa).

A helical membrane pass occupies residues 58–80 (YWGYGAAYGISLGLIAGVALAGL).

Its subcellular location is the membrane. This is an uncharacterized protein from Bacillus subtilis (strain 168).